The following is a 570-amino-acid chain: Probable electron transfer flavoprotein-ubiquinone oxidoreductase (570 aa).

13–27 is an FAD binding site; it reads VVIVGAGPAGLSAAI. Cys515, Cys539, Cys542, and Cys545 together coordinate [4Fe-4S] cluster. In terms of domain architecture, 4Fe-4S ferredoxin-type spans 530-559; that stretch reads KRFQINAANCVHCKTCDIKDPSQNITWVTP.

The cofactor is [4Fe-4S] cluster. It depends on FAD as a cofactor.

It catalyses the reaction a ubiquinone + reduced [electron-transfer flavoprotein] = a ubiquinol + oxidized [electron-transfer flavoprotein] + H(+). Functionally, accepts electrons from ETF and reduces ubiquinone. In Acinetobacter baylyi (strain ATCC 33305 / BD413 / ADP1), this protein is Probable electron transfer flavoprotein-ubiquinone oxidoreductase (etfD).